Consider the following 584-residue polypeptide: Leucine-rich repeat and fibronectin type III domain-containing protein 1 (584 aa).

A signal peptide spans 1–17 (MERLVFCVLVFGALAKA). The LRRNT domain maps to 18–51 (QLCPGRCICQTISPTLTLLCAKTGLLFVPPTVDR). Residues 18–494 (QLCPGRCICQ…VPSQFLGGTM (477 aa)) are Extracellular-facing. LRR repeat units follow at residues 52 to 73 (KTVE…DFLN), 76 to 97 (SLVH…AFMG), 100 to 121 (SLRA…QLKG), 124 to 145 (NLRH…SFDE), 149 to 170 (TIED…AIAR), 173 to 194 (NINT…TFTL), and 197 to 218 (KLVR…TLFQ). Asn-73 carries N-linked (GlcNAc...) asparagine glycosylation. Residues 241 to 287 (NPLHCNCELLWLRRLTREDDLETCASPEHLMDKYFWSIQEEEFICEP) form the LRRCT domain. One can recognise an Ig-like domain in the interval 288–375 (PLITKHQVTK…GIATAAVHVH (88 aa)). Cysteines 310 and 359 form a disulfide. Residues Asn-332, Asn-341, Asn-384, Asn-408, and Asn-421 are each glycosylated (N-linked (GlcNAc...) asparagine). The interval 393–414 (DPGLSDISTSSRSSSNDSKTHS) is disordered. Residues 397 to 409 (SDISTSSRSSSND) are compositionally biased toward low complexity. Residues 495–515 (IIIIGGIIVASVLVFIIILMI) form a helical membrane-spanning segment. Over 516-584 (RYKAYSGGGG…MVLPILHLLF (69 aa)) the chain is Cytoplasmic. The tract at residues 539-564 (HVHSQTNGSRSAATKQSEEPPESPAG) is disordered. Polar residues predominate over residues 540-553 (VHSQTNGSRSAATK).

This sequence belongs to the LRFN family.

It is found in the membrane. Its subcellular location is the synapse. Involved in the regulation of excitatory synapses. The protein is Leucine-rich repeat and fibronectin type III domain-containing protein 1 (lrfn1) of Danio rerio (Zebrafish).